The following is a 331-amino-acid chain: Ketol-acid reductoisomerase (NADP(+)) (331 aa).

Positions 2 to 182 (AKVYYDEDAN…GGTKGGVLET (181 aa)) constitute a KARI N-terminal Rossmann domain. Residues 25-28 (YGSQ), Ser-51, Ser-53, and 83-86 (DEKQ) each bind NADP(+). Residue His-108 is part of the active site. An NADP(+)-binding site is contributed by Gly-134. Residues 183–328 (TFKDETETDL…VELRAMMPWL (146 aa)) form the KARI C-terminal knotted domain. Mg(2+)-binding residues include Asp-191, Glu-195, Glu-227, and Glu-231. A substrate-binding site is contributed by Ser-252.

Belongs to the ketol-acid reductoisomerase family. It depends on Mg(2+) as a cofactor.

The enzyme catalyses (2R)-2,3-dihydroxy-3-methylbutanoate + NADP(+) = (2S)-2-acetolactate + NADPH + H(+). It carries out the reaction (2R,3R)-2,3-dihydroxy-3-methylpentanoate + NADP(+) = (S)-2-ethyl-2-hydroxy-3-oxobutanoate + NADPH + H(+). Its pathway is amino-acid biosynthesis; L-isoleucine biosynthesis; L-isoleucine from 2-oxobutanoate: step 2/4. It functions in the pathway amino-acid biosynthesis; L-valine biosynthesis; L-valine from pyruvate: step 2/4. Its function is as follows. Involved in the biosynthesis of branched-chain amino acids (BCAA). Catalyzes an alkyl-migration followed by a ketol-acid reduction of (S)-2-acetolactate (S2AL) to yield (R)-2,3-dihydroxy-isovalerate. In the isomerase reaction, S2AL is rearranged via a Mg-dependent methyl migration to produce 3-hydroxy-3-methyl-2-ketobutyrate (HMKB). In the reductase reaction, this 2-ketoacid undergoes a metal-dependent reduction by NADPH to yield (R)-2,3-dihydroxy-isovalerate. This Clostridium novyi (strain NT) protein is Ketol-acid reductoisomerase (NADP(+)).